A 167-amino-acid polypeptide reads, in one-letter code: Ion-translocating oxidoreductase complex subunit B (167 aa).

Positions 1-22 (MITLIIFSFLSFLLGIILSFTA) are hydrophobic. Positions 28 to 87 (QEDPIVEIVNELLPQSQCAQCGYSGCYPYAKAIVENSEKINKCIPGGTDLISAISSVLSI) constitute a 4Fe-4S domain. Residues cysteine 45, cysteine 48, cysteine 53, cysteine 70, cysteine 113, cysteine 116, cysteine 119, cysteine 123, cysteine 143, cysteine 146, cysteine 149, and cysteine 153 each contribute to the [4Fe-4S] cluster site. 4Fe-4S ferredoxin-type domains are found at residues 104-133 (NTVL…GAPN) and 134-163 (FIHT…IKKE).

The protein belongs to the 4Fe4S bacterial-type ferredoxin family. RnfB subfamily. In terms of assembly, the complex is composed of six subunits: RnfA, RnfB, RnfC, RnfD, RnfE and RnfG. It depends on [4Fe-4S] cluster as a cofactor.

It is found in the cell inner membrane. Its function is as follows. Part of a membrane-bound complex that couples electron transfer with translocation of ions across the membrane. This is Ion-translocating oxidoreductase complex subunit B from Buchnera aphidicola subsp. Acyrthosiphon pisum (strain Tuc7).